Reading from the N-terminus, the 540-residue chain is H(+)/hexose cotransporter 2 (540 aa).

The Cytoplasmic portion of the chain corresponds to 1 to 29 (MAGGGPVASTTTNRASQYGYARGGLNWYI). A helical transmembrane segment spans residues 30–50 (FIVALTAGSGGLLFGYDIGVT). Residues 51–90 (GGVTSMPEFLQKFFPSIYDRTQQPSDSKDPYCTYDDQKLQ) are Extracellular-facing. Residues 91 to 111 (LFTSSFFLAGMFVSFFAGSVV) traverse the membrane as a helical segment. Over 112-124 (RRWGRKPTMLIAS) the chain is Cytoplasmic. A helical membrane pass occupies residues 125-135 (VLFLAGAGLNA). Topologically, residues 136–147 (GAQDLAMLVIGR) are extracellular. Residues 148-168 (VLLGFGVGGGNNAVPLYLSEC) form a helical membrane-spanning segment. The Cytoplasmic segment spans residues 169–176 (APPKYRGG). The chain crosses the membrane as a helical span at residues 177 to 197 (LNMMFQLAVTIGIIVAQLVNY). Topologically, residues 198–207 (GTQTMNNGWR) are extracellular. The helical transmembrane segment at 208-228 (LSLGLAGVPAIILLIGSLLLP) threads the bilayer. Residues 229–296 (ETPNSLIERG…YSPMLIVTSL (68 aa)) lie on the Cytoplasmic side of the membrane. A helical transmembrane segment spans residues 297 to 317 (IAMLQQLTGINAIMFYVPVLF). Topologically, residues 318 to 326 (SSFGTARHA) are extracellular. Residues 327–337 (ALLNTVIIGAV) traverse the membrane as a helical segment. Residues 338–355 (NVAATFVSIFSVDKFGRR) lie on the Cytoplasmic side of the membrane. A helical membrane pass occupies residues 356-376 (GLFLEGGIQMFIGQVVTAAVL). Residues 377–396 (GVELNKYGTNLPSSTAAGVL) are Extracellular-facing. A helical transmembrane segment spans residues 397–417 (VVICVYVAAFAWSWGPLGWLV). Over 418 to 435 (PSEIQTLETRGAGMSMAV) the chain is Cytoplasmic. Residues 436 to 456 (IVNFLFSFVIGQAFLSMMCAM) traverse the membrane as a helical segment. At 457 to 458 (RW) the chain is on the extracellular side. Residues 459–479 (GVFLFFAGWVVIMTFFVYFCL) traverse the membrane as a helical segment. Topologically, residues 480-540 (PETKGVPVET…SEDGKPASDQ (61 aa)) are cytoplasmic.

It belongs to the major facilitator superfamily. Sugar transporter (TC 2.A.1.1) family.

It is found in the membrane. In terms of biological role, active uptake of galactose. This chain is H(+)/hexose cotransporter 2 (HUP2), found in Parachlorella kessleri (Green alga).